The primary structure comprises 733 residues: Two pore calcium channel protein 1 (733 aa).

An N-acetylmethionine modification is found at M1. At 1–71 (MEDPLIGRDS…RYYFIFTRLD (71 aa)) the chain is on the cytoplasmic side. The helical transmembrane segment at 72-92 (LIWSLNYFALLFLNFFEQPLW) threads the bilayer. Residues 93–120 (CEKNPKPSCKDRDYYYLGELPYLTNAES) lie on the Vacuolar side of the membrane. A helical transmembrane segment spans residues 121–141 (IIYEVITLAILLVHTFFPISY). At 142–158 (EGSRIFWTSRLNLVKVA) the chain is on the cytoplasmic side. The chain crosses the membrane as a helical span at residues 159-179 (CVVILFVDVLVDFLYLSPLAF). Position 180 (D180) is a topological domain, vacuolar. A helical; Voltage-sensor membrane pass occupies residues 181 to 199 (FLPFRIAPYVRVIIFILSI). Over 200–218 (RELRDTLVLLSGMLGTYLN) the chain is Cytoplasmic. A helical membrane pass occupies residues 219-239 (ILALWMLFLLFASWIAFVMFE). Over 240-245 (DTQQGL) the chain is Vacuolar. An intramembrane region (pore-forming) is located at residues 246–260 (TVFTSYGATLYQMFI). The Vacuolar segment spans residues 261–282 (LFTTSNNPDVWIPAYKSSRWSS). A helical transmembrane segment spans residues 283–303 (VFFVLYVLIGVYFVTNLILAV). Topologically, residues 304-428 (VYDSFKEQLA…LSQQLRAFVR (125 aa)) are cytoplasmic. EF-hand domains lie at 322-357 (MKRR…LTNY) and 363-398 (ISKE…IALR). A helical transmembrane segment spans residues 429-449 (SPNFGYAISFILIINFIAVVV). The Vacuolar segment spans residues 450-465 (ETTLDIEESSAQKPWQ). A helical membrane pass occupies residues 466–486 (VAEFVFGWIYVLEMALKIYTY). At 487–498 (GFENYWREGANR) the chain is on the cytoplasmic side. A helical membrane pass occupies residues 499–519 (FDFLVTWVIVIGETATFITPD). Over 520–528 (ENTFFSNGE) the chain is Vacuolar. A helical; Voltage-sensor transmembrane segment spans residues 529–546 (WIRYLLLARMLRLIRLLM). The Cytoplasmic portion of the chain corresponds to 547-557 (NVQRYRAFIAT). A helical transmembrane segment spans residues 558–578 (FITLIPSLMPYLGTIFCVLCI). At 579–615 (YCSIGVQVFGGLVNAGNKKLFETELAEDDYLLFNFND) the chain is on the vacuolar side. The segment at residues 616–630 (YPNGMVTLFNLLVMG) is an intramembrane region (pore-forming). The Vacuolar segment spans residues 631–651 (NWQVWMESYKDLTGTWWSITY). Residues 652–672 (FVSFYVITILLLLNLVVAFVL) form a helical membrane-spanning segment. The Cytoplasmic portion of the chain corresponds to 673-733 (EAFFTELDLE…SKPECSTSDT (61 aa)). Positions 686 to 695 (KCQGQDSQEK) are enriched in basic and acidic residues. A disordered region spans residues 686 to 711 (KCQGQDSQEKRNRRRSAGSKSRSQRV).

The protein belongs to the calcium channel alpha-1 subunit (TC 1.A.1.11) family. Two pore calcium channel subfamily. Homodimer. In terms of tissue distribution, ubiquitously expressed.

It localises to the vacuole membrane. With respect to regulation, inhibited by Al(3+). Functionally, functions as a voltage-gated inward-rectifying Ca(2+) channel (VDCC) across the vacuole membrane. Is one of the essential components of the slow vacuolar (SV) channel. Acts as the major ROS-responsive Ca(2+) channel and is the possible target of Al-dependent inhibition. Involved in the regulation of germination and stomatal movement. In Arabidopsis thaliana (Mouse-ear cress), this protein is Two pore calcium channel protein 1 (TPC1).